Reading from the N-terminus, the 146-residue chain is Multiple coagulation factor deficiency protein 2 (146 aa).

An N-terminal signal peptide occupies residues 1–26 (MTMRSLLRTPFLCGLLWAFCAPGARA). The EF-hand 1 domain maps to 68 to 103 (SPQELQLHYFKMHDYDGNNLLDGLELSTAITHVHKE). Positions 81, 83, 85, and 92 each coordinate Ca(2+). Ser106 carries the phosphoserine modification. Positions 116–146 (ELINIIDGVLRDDDKNNDGYIDYAEFAKSLQ) constitute an EF-hand 2 domain. Ca(2+)-binding residues include Asp129, Asn131, Asp133, Tyr135, and Glu140.

Interacts in a calcium-dependent manner with LMAN1.

The protein resides in the endoplasmic reticulum-Golgi intermediate compartment. It is found in the endoplasmic reticulum. The protein localises to the golgi apparatus. In terms of biological role, the MCFD2-LMAN1 complex forms a specific cargo receptor for the ER-to-Golgi transport of selected proteins. Plays a role in the secretion of coagulation factors. This is Multiple coagulation factor deficiency protein 2 (MCFD2) from Homo sapiens (Human).